Consider the following 276-residue polypeptide: Undecaprenyl-diphosphatase (276 aa).

Helical transmembrane passes span 84–104, 115–135, 188–208, 222–242, and 250–270; these read YRLGWYVIIGTIPICVLGLLF, LWVVATALVVFSGVIALAEYL, FGFLLAIPAVFASGLFSLPDA, QLLVATLIAFVVGLAAVSWFL, and MYWFVGYRVVVGVVVLILLAT.

Belongs to the UppP family.

It is found in the cell membrane. The catalysed reaction is di-trans,octa-cis-undecaprenyl diphosphate + H2O = di-trans,octa-cis-undecaprenyl phosphate + phosphate + H(+). Its function is as follows. Catalyzes the dephosphorylation of undecaprenyl diphosphate (UPP). Confers resistance to bacitracin. The chain is Undecaprenyl-diphosphatase from Mycobacterium ulcerans (strain Agy99).